Here is a 297-residue protein sequence, read N- to C-terminus: Rhomboid-type serine protease 2 (297 aa).

6 helical membrane-spanning segments follow: residues 14–34 (IQHP…IFLL), 60–80 (ISFY…LVAL), 98–118 (IVLN…SIGF), 120–140 (PDEA…YWAI), 155–175 (LVVP…IVIP), and 179–199 (FIGH…YLDV). S128 acts as the Nucleophile in catalysis. H182 is an active-site residue. Residues 268-297 (DLEAGTRSRGNSSVDPTTSFPGTGQTLGTQ) form a disordered region. A compositionally biased stretch (polar residues) spans 275–297 (SRGNSSVDPTTSFPGTGQTLGTQ).

The protein belongs to the peptidase S54 family.

It localises to the golgi apparatus membrane. The protein resides in the golgi apparatus. It is found in the cis-Golgi network membrane. The catalysed reaction is Cleaves type-1 transmembrane domains using a catalytic dyad composed of serine and histidine that are contributed by different transmembrane domains.. Its function is as follows. Probable rhomboid-type serine protease that catalyzes intramembrane proteolysis. The sequence is that of Rhomboid-type serine protease 2 (RBD2) from Yarrowia lipolytica (strain CLIB 122 / E 150) (Yeast).